Here is a 327-residue protein sequence, read N- to C-terminus: Aspartate carbamoyltransferase catalytic subunit (327 aa).

Carbamoyl phosphate contacts are provided by Arg-54 and Thr-55. Lys-82 contacts L-aspartate. Carbamoyl phosphate is bound by residues Arg-104, His-134, and Gln-137. Residues Arg-177 and Arg-232 each contribute to the L-aspartate site. The carbamoyl phosphate site is built by Gly-280 and Pro-281.

Belongs to the aspartate/ornithine carbamoyltransferase superfamily. ATCase family. Heterododecamer (2C3:3R2) of six catalytic PyrB chains organized as two trimers (C3), and six regulatory PyrI chains organized as three dimers (R2).

The catalysed reaction is carbamoyl phosphate + L-aspartate = N-carbamoyl-L-aspartate + phosphate + H(+). Its pathway is pyrimidine metabolism; UMP biosynthesis via de novo pathway; (S)-dihydroorotate from bicarbonate: step 2/3. Functionally, catalyzes the condensation of carbamoyl phosphate and aspartate to form carbamoyl aspartate and inorganic phosphate, the committed step in the de novo pyrimidine nucleotide biosynthesis pathway. This Micrococcus luteus (strain ATCC 4698 / DSM 20030 / JCM 1464 / CCM 169 / CCUG 5858 / IAM 1056 / NBRC 3333 / NCIMB 9278 / NCTC 2665 / VKM Ac-2230) (Micrococcus lysodeikticus) protein is Aspartate carbamoyltransferase catalytic subunit.